A 31-amino-acid polypeptide reads, in one-letter code: Fibrinogen beta chain (31 aa).

Acidic residues predominate over residues 1-10 (HYYDDTDEEE). A disordered region spans residues 1–31 (HYYDDTDEEERIVSTVDARGHRPLDKKREEA). At Tyr2 the chain carries Sulfotyrosine; partial. At Tyr3 the chain carries Sulfotyrosine. Over residues 18–31 (ARGHRPLDKKREEA) the composition is skewed to basic and acidic residues.

Heterohexamer; disulfide linked. Contains 2 sets of 3 non-identical chains (alpha, beta and gamma). The 2 heterotrimers are in head to head conformation with the N-termini in a small central domain. Conversion of fibrinogen to fibrin is triggered by thrombin, which cleaves fibrinopeptides A and B from alpha and beta chains, and thus exposes the N-terminal polymerization sites responsible for the formation of the soft clot.

It is found in the secreted. In terms of biological role, cleaved by the protease thrombin to yield monomers which, together with fibrinogen alpha (FGA) and fibrinogen gamma (FGG), polymerize to form an insoluble fibrin matrix. Fibrin has a major function in hemostasis as one of the primary components of blood clots. In addition, functions during the early stages of wound repair to stabilize the lesion and guide cell migration during re-epithelialization. Was originally thought to be essential for platelet aggregation, based on in vitro studies using anticoagulated blood. However subsequent studies have shown that it is not absolutely required for thrombus formation in vivo. Enhances expression of SELP in activated platelets. Maternal fibrinogen is essential for successful pregnancy. Fibrin deposition is also associated with infection, where it protects against IFNG-mediated hemorrhage. May also facilitate the antibacterial immune response via both innate and T-cell mediated pathways. This chain is Fibrinogen beta chain (FGB), found in Canis lupus familiaris (Dog).